A 1651-amino-acid chain; its full sequence is Putative serine/threonine-protein kinase/receptor R818 (1651 aa).

A signal peptide spans 1–19 (MKSIGIFVVALWLTHFCDG). Residues asparagine 111, asparagine 135, asparagine 190, asparagine 236, asparagine 275, asparagine 276, asparagine 287, asparagine 452, asparagine 455, asparagine 477, asparagine 495, asparagine 540, asparagine 596, and asparagine 722 are each glycosylated (N-linked (GlcNAc...) asparagine; by host). A helical membrane pass occupies residues 749 to 769 (IILAIVIPVSFVICCIIIVLV). Residues 793–1057 (LDFMESLGSG…EIMTKLSTLI (265 aa)) enclose the Protein kinase 1 domain. ATP-binding positions include 799–807 (LGSGGSGEV) and lysine 820. Aspartate 915 (proton acceptor) is an active-site residue. Residues 1089 to 1115 (IHNNDETKNSFGSTTYGSNTISSSSNT) are disordered. The segment covering 1100–1115 (GSTTYGSNTISSSSNT) has biased composition (low complexity). Residues 1135 to 1278 (IIVFTDIISA…VTVNIAAKIT (144 aa)) form the Guanylate cyclase domain. In terms of domain architecture, Protein kinase 2 spans 1394–1645 (IQIGKQIGVG…DVIMGLNDML (252 aa)). ATP-binding positions include 1400–1408 (IGVGSYGIV) and lysine 1421. The active-site Proton acceptor is aspartate 1515.

Its subcellular location is the membrane. The catalysed reaction is L-seryl-[protein] + ATP = O-phospho-L-seryl-[protein] + ADP + H(+). It catalyses the reaction L-threonyl-[protein] + ATP = O-phospho-L-threonyl-[protein] + ADP + H(+). This Acanthamoeba polyphaga mimivirus (APMV) protein is Putative serine/threonine-protein kinase/receptor R818.